The following is a 434-amino-acid chain: Trigger factor (434 aa).

The PPIase FKBP-type domain maps to 160 to 245 (DDKVKMNFIG…LTEVQAANLP (86 aa)).

It belongs to the FKBP-type PPIase family. Tig subfamily.

It is found in the cytoplasm. The catalysed reaction is [protein]-peptidylproline (omega=180) = [protein]-peptidylproline (omega=0). Involved in protein export. Acts as a chaperone by maintaining the newly synthesized protein in an open conformation. Functions as a peptidyl-prolyl cis-trans isomerase. The polypeptide is Trigger factor (Shewanella frigidimarina (strain NCIMB 400)).